Reading from the N-terminus, the 162-residue chain is Cyclic pyranopterin monophosphate synthase (162 aa).

Substrate-binding positions include 75–77 (MCH) and 116–117 (ME). Asp-131 is an active-site residue.

It belongs to the MoaC family. Homohexamer; trimer of dimers.

The enzyme catalyses (8S)-3',8-cyclo-7,8-dihydroguanosine 5'-triphosphate = cyclic pyranopterin phosphate + diphosphate. It participates in cofactor biosynthesis; molybdopterin biosynthesis. In terms of biological role, catalyzes the conversion of (8S)-3',8-cyclo-7,8-dihydroguanosine 5'-triphosphate to cyclic pyranopterin monophosphate (cPMP). The chain is Cyclic pyranopterin monophosphate synthase from Staphylococcus epidermidis (strain ATCC 35984 / DSM 28319 / BCRC 17069 / CCUG 31568 / BM 3577 / RP62A).